Consider the following 393-residue polypeptide: Bifunctional enzyme Fae/Hps (393 aa).

The interval 1 to 161 (MYLIGEALIG…HEKDRAAHAV (161 aa)) is formaldehyde-activating enzyme. The active-site Proton donor is His-17. The substrate site is built by Asp-19, Leu-48, Lys-66, Thr-68, and Gln-83. The interval 162–393 (MGFKVPRLWD…IDQFRIMTDF (232 aa)) is 3-hexulose-6-phosphate synthase.

This sequence in the N-terminal section; belongs to the formaldehyde-activating enzyme family. In the C-terminal section; belongs to the HPS/KGPDC family. HPS subfamily.

It carries out the reaction 5,6,7,8-tetrahydromethanopterin + formaldehyde = 5,10-methylenetetrahydromethanopterin + H2O. The catalysed reaction is D-ribulose 5-phosphate + formaldehyde = D-arabino-hex-3-ulose 6-phosphate. It participates in carbohydrate biosynthesis; D-ribose 5-phosphate biosynthesis. Functionally, catalyzes the condensation of formaldehyde with tetrahydromethanopterin (H(4)MPT) to 5,10-methylenetetrahydromethanopterin. In terms of biological role, catalyzes the reversible formation of ribulose-5-phosphate and formaldehyde from 3-hexulose-6-phosphate. This is Bifunctional enzyme Fae/Hps from Methanospirillum hungatei JF-1 (strain ATCC 27890 / DSM 864 / NBRC 100397 / JF-1).